The chain runs to 255 residues: 28.1 kDa virulence protein (255 aa).

It belongs to the SpvA family.

Functionally, not known. This protein is involved in the virulence of salmonellas. The polypeptide is 28.1 kDa virulence protein (mkaB) (Salmonella typhimurium).